We begin with the raw amino-acid sequence, 272 residues long: 5'-AMP-activated protein kinase subunit beta-2 (272 aa).

Residues 1 to 52 are disordered; sequence MGNTTSDRVSGERHGAKAARSEGAGGHAPGKEHKIMVGSTDDPSVFSLPDSK. The residue at position 39 (Ser-39) is a Phosphoserine. Thr-40 bears the Phosphothreonine mark. At Ser-69 the chain carries Phosphoserine; by ULK1. Ser-95 and Ser-108 each carry phosphoserine. Thr-148 is modified (phosphothreonine). A phosphoserine mark is found at Ser-158, Ser-170, Ser-174, and Ser-184.

Belongs to the 5'-AMP-activated protein kinase beta subunit family. AMPK is a heterotrimer of an alpha catalytic subunit (PRKAA1 or PRKAA2), a beta (PRKAB1 or PRKAB2) and a gamma non-catalytic subunits (PRKAG1, PRKAG2 or PRKAG3). Post-translationally, phosphorylated when associated with the catalytic subunit (PRKAA1 or PRKAA2). Phosphorylated by ULK1 and ULK2; leading to negatively regulate AMPK activity and suggesting the existence of a regulatory feedback loop between ULK1, ULK2 and AMPK.

Its function is as follows. Non-catalytic subunit of AMP-activated protein kinase (AMPK), an energy sensor protein kinase that plays a key role in regulating cellular energy metabolism. In response to reduction of intracellular ATP levels, AMPK activates energy-producing pathways and inhibits energy-consuming processes: inhibits protein, carbohydrate and lipid biosynthesis, as well as cell growth and proliferation. AMPK acts via direct phosphorylation of metabolic enzymes, and by longer-term effects via phosphorylation of transcription regulators. Also acts as a regulator of cellular polarity by remodeling the actin cytoskeleton; probably by indirectly activating myosin. Beta non-catalytic subunit acts as a scaffold on which the AMPK complex assembles, via its C-terminus that bridges alpha (PRKAA1 or PRKAA2) and gamma subunits (PRKAG1, PRKAG2 or PRKAG3). The protein is 5'-AMP-activated protein kinase subunit beta-2 (PRKAB2) of Homo sapiens (Human).